A 565-amino-acid polypeptide reads, in one-letter code: Proline--tRNA ligase (565 aa).

This sequence belongs to the class-II aminoacyl-tRNA synthetase family. ProS type 1 subfamily. Homodimer.

It is found in the cytoplasm. The catalysed reaction is tRNA(Pro) + L-proline + ATP = L-prolyl-tRNA(Pro) + AMP + diphosphate. In terms of biological role, catalyzes the attachment of proline to tRNA(Pro) in a two-step reaction: proline is first activated by ATP to form Pro-AMP and then transferred to the acceptor end of tRNA(Pro). As ProRS can inadvertently accommodate and process non-cognate amino acids such as alanine and cysteine, to avoid such errors it has two additional distinct editing activities against alanine. One activity is designated as 'pretransfer' editing and involves the tRNA(Pro)-independent hydrolysis of activated Ala-AMP. The other activity is designated 'posttransfer' editing and involves deacylation of mischarged Ala-tRNA(Pro). The misacylated Cys-tRNA(Pro) is not edited by ProRS. This chain is Proline--tRNA ligase, found in Francisella tularensis subsp. tularensis (strain FSC 198).